Consider the following 234-residue polypeptide: Glucosamine-6-phosphate deaminase (234 aa).

The active-site Proton acceptor; for enolization step is the aspartate 62. Asparagine 128 serves as the catalytic For ring-opening step. Catalysis depends on histidine 130, which acts as the Proton acceptor; for ring-opening step. The active-site For ring-opening step is the glutamate 135.

Belongs to the glucosamine/galactosamine-6-phosphate isomerase family. NagB subfamily.

It catalyses the reaction alpha-D-glucosamine 6-phosphate + H2O = beta-D-fructose 6-phosphate + NH4(+). The protein operates within amino-sugar metabolism; N-acetylneuraminate degradation; D-fructose 6-phosphate from N-acetylneuraminate: step 5/5. Its function is as follows. Catalyzes the reversible isomerization-deamination of glucosamine 6-phosphate (GlcN6P) to form fructose 6-phosphate (Fru6P) and ammonium ion. This Ligilactobacillus salivarius (strain UCC118) (Lactobacillus salivarius) protein is Glucosamine-6-phosphate deaminase.